The following is a 199-amino-acid chain: Superoxide dismutase [Mn/Fe] (199 aa).

Residues H27, H81, D161, and H165 each coordinate Fe(3+). 4 residues coordinate Mn(2+): H27, H81, D161, and H165.

The protein belongs to the iron/manganese superoxide dismutase family. As to quaternary structure, homodimer. Mn(2+) serves as cofactor. Fe(3+) is required as a cofactor.

It catalyses the reaction 2 superoxide + 2 H(+) = H2O2 + O2. Destroys superoxide anion radicals which are normally produced within the cells and which are toxic to biological systems. Catalyzes the dismutation of superoxide anion radicals into O2 and H2O2 by successive reduction and oxidation of the transition metal ion at the active site. This chain is Superoxide dismutase [Mn/Fe] (sodA), found in Staphylococcus saprophyticus subsp. saprophyticus (strain ATCC 15305 / DSM 20229 / NCIMB 8711 / NCTC 7292 / S-41).